Reading from the N-terminus, the 800-residue chain is Nucleolar RNA helicase 2-B (800 aa).

The span at 1 to 14 (MPGKVYTDEMEGKS) shows a compositional bias: basic and acidic residues. Residues 1–200 (MPGKVYTDEM…TDTSEITAAN (200 aa)) are disordered. The span at 114 to 124 (ETNISLSSQGG) shows a compositional bias: polar residues. The Q motif motif lies at 221-249 (GDFSKFPISKDTIKNLQAKGVTYLFPIQS). Residues 252 to 431 (FHTVYSGKDV…KKYMRKQYEK (180 aa)) enclose the Helicase ATP-binding domain. 265-272 (ARTGTGKT) contacts ATP. Positions 374–377 (DEVD) match the DEAD box motif. Positions 464–620 (DIVQVYSGSH…SSADAIKSLD (157 aa)) constitute a Helicase C-terminal domain. The interval 750 to 800 (IQESERSFDGPRNRSFGGRGRRPFDRRNNSRNSSGGGGGRRGRSGGFRRGR) is disordered. A compositionally biased stretch (basic and acidic residues) spans 752-761 (ESERSFDGPR). The segment covering 789–800 (RRGRSGGFRRGR) has biased composition (basic residues).

The protein belongs to the DEAD box helicase family. DDX21/DDX50 subfamily. Widely expressed. Expressed at higher level in stomach. Expressed at lower level compared to ddx21-a.

The protein resides in the nucleus. It localises to the nucleolus. It is found in the nucleoplasm. Its subcellular location is the cytoplasm. The protein localises to the cytosol. The protein resides in the mitochondrion. It carries out the reaction ATP + H2O = ADP + phosphate + H(+). RNA helicase that acts as a sensor of the transcriptional status of both RNA polymerase (Pol) I and II: promotes ribosomal RNA (rRNA) processing and transcription from polymerase II (Pol II). Binds various RNAs, such as rRNAs, snoRNAs, 7SK and, at lower extent, mRNAs. In the nucleolus, localizes to rDNA locus, where it directly binds rRNAs and snoRNAs, and promotes rRNA transcription, processing and modification. Required for rRNA 2'-O-methylation, possibly by promoting the recruitment of late-acting snoRNAs SNORD56 and SNORD58 with pre-ribosomal complexes. In the nucleoplasm, binds 7SK RNA and is recruited to the promoters of Pol II-transcribed genes: acts by facilitating the release of P-TEFb from inhibitory 7SK snRNP in a manner that is dependent on its helicase activity, thereby promoting transcription of its target genes. Required to prevent R-loop-associated DNA damage and transcription-associated genomic instability. The chain is Nucleolar RNA helicase 2-B (ddx21-b) from Xenopus laevis (African clawed frog).